A 740-amino-acid polypeptide reads, in one-letter code: Elongation factor 2 (740 aa).

The tr-type G domain occupies 23–264 (AQIRNAGTLA…MIIEHIPPPN (242 aa)). GTP-binding positions include 32–39 (AHVDHGKT), 98–102 (DTPGH), and 152–155 (NKID). H605 is subject to Diphthamide.

Belongs to the TRAFAC class translation factor GTPase superfamily. Classic translation factor GTPase family. EF-G/EF-2 subfamily.

The protein localises to the cytoplasm. Catalyzes the GTP-dependent ribosomal translocation step during translation elongation. During this step, the ribosome changes from the pre-translocational (PRE) to the post-translocational (POST) state as the newly formed A-site-bound peptidyl-tRNA and P-site-bound deacylated tRNA move to the P and E sites, respectively. Catalyzes the coordinated movement of the two tRNA molecules, the mRNA and conformational changes in the ribosome. The chain is Elongation factor 2 from Pyrobaculum aerophilum (strain ATCC 51768 / DSM 7523 / JCM 9630 / CIP 104966 / NBRC 100827 / IM2).